A 437-amino-acid chain; its full sequence is MKKAILYLNQFFGQVGGEDKADYEPEIINGQVGAAMMLNGVLEGAEVTHTIICGDNFMGTYKDEAVSRIMGFLEDKEFDIFLAGPAFQAGRYGVACGEICKVVKEKYNVPVVTSMHVENPGVQMFKKDMYVMIGGNNAGRMRQDMSAMAKVANKIIAGEKIGPADEEGFFPRGKRHQHWREDGKPASERVVDMLLKKLSGEEFQTELPIPKSDRVEIAAPIKDLSKATIAVVTTGGIVPVDNPDRIQSASATRWGMYDVTGLERLEGGVYKTIHAGFDPAAADADPNVIVPLDALRAYEKEGKIGKVHEYFYSTVGTGTTEAEAARMAKEIVVKLKQGGVDGVIMTSTUGTCTRCGATMVKEIERAGFPIVQMCNLIPVASTVGANKIVPTISIPYPLGDPSTSKEQQWKLRYHRVGTALDALTVDVQEQTIFKVKI.

Residue Sec-349 is part of the active site. Residue Sec-349 is a non-standard amino acid, selenocysteine.

The protein belongs to the GrdB/GrdF/GrdH family. Heterotetramer of two alpha and two beta subunits. Component of the betaine reductase complex, together with components A and C. PB is substrate specific.

It carries out the reaction acetyl phosphate + trimethylamine + [thioredoxin]-disulfide + H2O = glycine betaine + [thioredoxin]-dithiol + phosphate + H(+). In terms of biological role, in the first step of betaine reductase, the substrate is bound to component PB via a Schiff base intermediate. Then the PB-activated substrate is nucleophilically attacked by the selenol anion of component PA to transform it to a carboxymethylated selenoether and the respective amine. By action of component PC, acetyl phosphate is formed, leaving component PA in its oxidized state. Finally component PA becomes reduced by the thioredoxin system to start a new catalytic cycle of reductive deamination. The chain is Betaine reductase complex component B subunit beta (grdH) from Peptoclostridium acidaminophilum (Eubacterium acidaminophilum).